Reading from the N-terminus, the 201-residue chain is MINKAILGGTFDPIHNAHINVAYEALERFNLEEVIFIPAGNPPHKIKLKKTPAHIRYEMVKLAIEKETRFSISDFEIKSKDLSYTYRTLKHFKEKEPETNWYFITGEDCLSYLEHWKYIDEIFNICNFVIFSREGFKGKEEIIKKKKSMLLKYGKEILFMDASILDISSTKIRNRIKEGKEVSFYMPDKVYKFILQNNLYK.

It belongs to the NadD family.

It carries out the reaction nicotinate beta-D-ribonucleotide + ATP + H(+) = deamido-NAD(+) + diphosphate. It participates in cofactor biosynthesis; NAD(+) biosynthesis; deamido-NAD(+) from nicotinate D-ribonucleotide: step 1/1. Functionally, catalyzes the reversible adenylation of nicotinate mononucleotide (NaMN) to nicotinic acid adenine dinucleotide (NaAD). This is Probable nicotinate-nucleotide adenylyltransferase from Clostridium botulinum (strain Loch Maree / Type A3).